A 251-amino-acid chain; its full sequence is 3-deoxy-manno-octulosonate cytidylyltransferase (251 aa).

Belongs to the KdsB family.

The protein localises to the cytoplasm. It catalyses the reaction 3-deoxy-alpha-D-manno-oct-2-ulosonate + CTP = CMP-3-deoxy-beta-D-manno-octulosonate + diphosphate. The protein operates within nucleotide-sugar biosynthesis; CMP-3-deoxy-D-manno-octulosonate biosynthesis; CMP-3-deoxy-D-manno-octulosonate from 3-deoxy-D-manno-octulosonate and CTP: step 1/1. It participates in bacterial outer membrane biogenesis; lipopolysaccharide biosynthesis. Its function is as follows. Activates KDO (a required 8-carbon sugar) for incorporation into bacterial lipopolysaccharide in Gram-negative bacteria. The sequence is that of 3-deoxy-manno-octulosonate cytidylyltransferase from Rhizobium johnstonii (strain DSM 114642 / LMG 32736 / 3841) (Rhizobium leguminosarum bv. viciae).